A 174-amino-acid chain; its full sequence is NADH-quinone oxidoreductase subunit C (174 aa).

The protein belongs to the complex I 30 kDa subunit family. As to quaternary structure, NDH-1 is composed of 14 different subunits. Subunits NuoB, C, D, E, F, and G constitute the peripheral sector of the complex.

Its subcellular location is the cell membrane. It catalyses the reaction a quinone + NADH + 5 H(+)(in) = a quinol + NAD(+) + 4 H(+)(out). In terms of biological role, NDH-1 shuttles electrons from NADH, via FMN and iron-sulfur (Fe-S) centers, to quinones in the respiratory chain. The immediate electron acceptor for the enzyme in this species is believed to be ubiquinone. Couples the redox reaction to proton translocation (for every two electrons transferred, four hydrogen ions are translocated across the cytoplasmic membrane), and thus conserves the redox energy in a proton gradient. The sequence is that of NADH-quinone oxidoreductase subunit C from Roseiflexus sp. (strain RS-1).